The chain runs to 249 residues: BPI fold-containing family A member 1 (249 aa).

An N-terminal signal peptide occupies residues 1-15 (MFQVAGLIVFCGLLA). The interval 81-86 (LLGGLL) is important for surfactant activity and antibacterial properties. Residue asparagine 151 is glycosylated (N-linked (GlcNAc...) asparagine). Residues cysteine 173 and cysteine 217 are joined by a disulfide bond.

The protein belongs to the BPI/LBP/Plunc superfamily. Plunc family. In terms of assembly, monomer. Interacts (via N-terminus) with SCNN1B, a subunit of the heterotrimeric epithelial sodium channel (ENaC); this inhibits proteolytic activation of ENaC. As to expression, expressed in lung and trachea.

It localises to the secreted. In terms of biological role, lipid-binding protein which shows high specificity for the surfactant phospholipid dipalmitoylphosphatidylcholine (DPPC). Plays a role in the innate immune responses of the upper airways. Reduces the surface tension in secretions from airway epithelia and inhibits the formation of biofilm by pathogenic Gram-negative bacteria, such as P.aeruginosa and K.pneumoniae. Negatively regulates proteolytic cleavage of SCNN1G, an event that is required for activation of the epithelial sodium channel (ENaC), and thereby contributes to airway surface liquid homeostasis and proper clearance of mucus. Plays a role in the airway inflammatory response after exposure to irritants. May attract macrophages and neutrophils. The sequence is that of BPI fold-containing family A member 1 (BPIFA1) from Sus scrofa (Pig).